The sequence spans 560 residues: Poly(3-hydroxyalkanoate) polymerase 2 (560 aa).

Residue C296 is part of the active site.

It belongs to the PHA/PHB synthase family. Type II PhaC subfamily.

The protein operates within biopolymer metabolism; poly-(R)-3-hydroxybutanoate biosynthesis. Functionally, synthesizes poly(3-hydroxyalkanoates) (PHA), complements a mutant of P.putida that does not make PHA. The chain is Poly(3-hydroxyalkanoate) polymerase 2 from Ectopseudomonas oleovorans (Pseudomonas oleovorans).